The primary structure comprises 122 residues: MSNLSRKQQTQKRHRRLRRHLKGTAQRPRLAVFRSNNHIYAQVIDDEAQNTLCAASTLDKDLRTSLKADGSSCDASNAVGDLVAKRALAKGIQQVVFDRGGNLYHGRVKSLADAAREAGLQF.

A disordered region spans residues 1–26 (MSNLSRKQQTQKRHRRLRRHLKGTAQ). The segment covering 9-22 (QTQKRHRRLRRHLK) has biased composition (basic residues).

It belongs to the universal ribosomal protein uL18 family. In terms of assembly, part of the 50S ribosomal subunit; part of the 5S rRNA/L5/L18/L25 subcomplex. Contacts the 5S and 23S rRNAs.

Functionally, this is one of the proteins that bind and probably mediate the attachment of the 5S RNA into the large ribosomal subunit, where it forms part of the central protuberance. This Prochlorococcus marinus (strain MIT 9313) protein is Large ribosomal subunit protein uL18.